The chain runs to 756 residues: 5-methyltetrahydropteroyltriglutamate--homocysteine methyltransferase (756 aa).

Residues 16 to 19 and lysine 116 each bind 5-methyltetrahydropteroyltri-L-glutamate; that span reads RELK. Residues 435-437 and glutamate 488 contribute to the L-homocysteine site; that span reads IGS. Residues 435–437 and glutamate 488 each bind L-methionine; that span reads IGS. Residues 519 to 520 and tryptophan 565 each bind 5-methyltetrahydropteroyltri-L-glutamate; that span reads RC. Aspartate 603 contributes to the L-homocysteine binding site. L-methionine is bound at residue aspartate 603. Glutamate 609 lines the 5-methyltetrahydropteroyltri-L-glutamate pocket. Residues histidine 645, cysteine 647, and glutamate 669 each contribute to the Zn(2+) site. Residue histidine 698 is the Proton donor of the active site. Cysteine 730 contacts Zn(2+).

The protein belongs to the vitamin-B12 independent methionine synthase family. Requires Zn(2+) as cofactor.

It catalyses the reaction 5-methyltetrahydropteroyltri-L-glutamate + L-homocysteine = tetrahydropteroyltri-L-glutamate + L-methionine. It participates in amino-acid biosynthesis; L-methionine biosynthesis via de novo pathway; L-methionine from L-homocysteine (MetE route): step 1/1. Catalyzes the transfer of a methyl group from 5-methyltetrahydrofolate to homocysteine resulting in methionine formation. This is 5-methyltetrahydropteroyltriglutamate--homocysteine methyltransferase from Marinobacter nauticus (strain ATCC 700491 / DSM 11845 / VT8) (Marinobacter aquaeolei).